An 863-amino-acid chain; its full sequence is Nitrate reductase [NADH] (863 aa).

Mo-molybdopterin is bound at residue Cys-137. One can recognise a Cytochrome b5 heme-binding domain in the interval Lys-484–Ala-559. Residues His-519 and His-542 each contribute to the heme site. The FAD-binding FR-type domain occupies Lys-602–Asp-719. FAD contacts are provided by residues Arg-659–Thr-662, Val-676–Tyr-680, Phe-688, Lys-693–Ser-695, and Thr-746.

This sequence belongs to the nitrate reductase family. Homodimer. It depends on FAD as a cofactor. Requires Mo-molybdopterin as cofactor. The cofactor is heme.

It carries out the reaction nitrite + NAD(+) + H2O = nitrate + NADH + H(+). Nitrate reductase is a key enzyme involved in the first step of nitrate assimilation in plants, fungi and bacteria. This Ulva prolifera (Green seaweed) protein is Nitrate reductase [NADH].